We begin with the raw amino-acid sequence, 102 residues long: Small ribosomal subunit protein eS24 (102 aa).

This sequence belongs to the eukaryotic ribosomal protein eS24 family.

This chain is Small ribosomal subunit protein eS24, found in Halorubrum lacusprofundi (strain ATCC 49239 / DSM 5036 / JCM 8891 / ACAM 34).